The following is a 177-amino-acid chain: ATP synthase subunit delta (177 aa).

This sequence belongs to the ATPase delta chain family. In terms of assembly, F-type ATPases have 2 components, F(1) - the catalytic core - and F(0) - the membrane proton channel. F(1) has five subunits: alpha(3), beta(3), gamma(1), delta(1), epsilon(1). F(0) has three main subunits: a(1), b(2) and c(10-14). The alpha and beta chains form an alternating ring which encloses part of the gamma chain. F(1) is attached to F(0) by a central stalk formed by the gamma and epsilon chains, while a peripheral stalk is formed by the delta and b chains.

Its subcellular location is the cell inner membrane. Functionally, f(1)F(0) ATP synthase produces ATP from ADP in the presence of a proton or sodium gradient. F-type ATPases consist of two structural domains, F(1) containing the extramembraneous catalytic core and F(0) containing the membrane proton channel, linked together by a central stalk and a peripheral stalk. During catalysis, ATP synthesis in the catalytic domain of F(1) is coupled via a rotary mechanism of the central stalk subunits to proton translocation. In terms of biological role, this protein is part of the stalk that links CF(0) to CF(1). It either transmits conformational changes from CF(0) to CF(1) or is implicated in proton conduction. This Escherichia coli O81 (strain ED1a) protein is ATP synthase subunit delta.